The primary structure comprises 502 residues: Glycerol kinase (502 aa).

An ADP-binding site is contributed by Thr-14. ATP contacts are provided by Thr-14, Thr-15, and Ser-16. Thr-14 provides a ligand contact to sn-glycerol 3-phosphate. Position 18 (Arg-18) interacts with ADP. Arg-84, Glu-85, Tyr-136, and Asp-246 together coordinate sn-glycerol 3-phosphate. Positions 84, 85, 136, 246, and 247 each coordinate glycerol. Positions 268 and 311 each coordinate ADP. Residues Thr-268, Gly-311, Gln-315, and Gly-412 each coordinate ATP. ADP is bound by residues Gly-412 and Asn-416.

The protein belongs to the FGGY kinase family. In terms of assembly, homotetramer and homodimer (in equilibrium). Heterodimer with EIIA-Glc. Binds 1 zinc ion per glycerol kinase EIIA-Glc dimer. The zinc ion is important for dimerization.

The enzyme catalyses glycerol + ATP = sn-glycerol 3-phosphate + ADP + H(+). It functions in the pathway polyol metabolism; glycerol degradation via glycerol kinase pathway; sn-glycerol 3-phosphate from glycerol: step 1/1. With respect to regulation, activity of this regulatory enzyme is affected by several metabolites. Allosterically and non-competitively inhibited by fructose 1,6-bisphosphate (FBP) and unphosphorylated phosphocarrier protein EIIA-Glc (III-Glc), an integral component of the bacterial phosphotransferase (PTS) system. Key enzyme in the regulation of glycerol uptake and metabolism. Catalyzes the phosphorylation of glycerol to yield sn-glycerol 3-phosphate. This Escherichia fergusonii (strain ATCC 35469 / DSM 13698 / CCUG 18766 / IAM 14443 / JCM 21226 / LMG 7866 / NBRC 102419 / NCTC 12128 / CDC 0568-73) protein is Glycerol kinase.